The following is a 360-amino-acid chain: Protein pelota homolog (360 aa).

Belongs to the eukaryotic release factor 1 family. Pelota subfamily. In terms of assembly, monomer. A divalent metal cation serves as cofactor.

The protein localises to the cytoplasm. In terms of biological role, may function in recognizing stalled ribosomes, interact with stem-loop structures in stalled mRNA molecules, and effect endonucleolytic cleavage of the mRNA. May play a role in the release non-functional ribosomes and degradation of damaged mRNAs. Has endoribonuclease activity. The polypeptide is Protein pelota homolog (Hyperthermus butylicus (strain DSM 5456 / JCM 9403 / PLM1-5)).